Consider the following 616-residue polypeptide: Protein LNK1 (616 aa).

4 disordered regions span residues 72–112, 361–398, 410–434, and 567–616; these read GKNP…HGFN, ESKS…GPTV, ANLL…KTDS, and SSLS…SDNN. Polar residues predominate over residues 371 to 395; it reads KPSPSSASNESYTSNHAQSIESLQG. Residues 567–577 show a composition bias toward low complexity; that stretch reads SSLSSDNNVLS. Residues 594 to 608 show a composition bias toward basic and acidic residues; it reads RIEKQEETTELRPEA.

In terms of assembly, interacts with CCA1, LHY, REV4 and REV8, but not with PRR7 or PRR9. In terms of tissue distribution, expressed in roots, stems, leaves, seedlings, cotyledons, inflorescences and siliques. Highest expression in root tips, young leaves and vasculatur tissues.

The protein localises to the nucleus. In terms of biological role, transcriptional coactivator necessary for expression of the clock genes PRR5 and TOC1. Antagonizes REV8 function in the regulation of anthocyanin accumulation. Involved in red light input to the clock. Activates clock-controlled genes with afternoon peak. Mediates light inhibition of hypocotyl elongation. This is Protein LNK1 from Arabidopsis thaliana (Mouse-ear cress).